The sequence spans 218 residues: Cytidylate kinase (218 aa).

Glycine 21–threonine 29 lines the ATP pocket.

This sequence belongs to the cytidylate kinase family. Type 1 subfamily.

The protein resides in the cytoplasm. It carries out the reaction CMP + ATP = CDP + ADP. The enzyme catalyses dCMP + ATP = dCDP + ADP. In Rickettsia canadensis (strain McKiel), this protein is Cytidylate kinase.